Reading from the N-terminus, the 580-residue chain is MRLSRYYIPTLKEDPSEAEVVSHKLLMRAGMIRKLTSGIYNYLPLGLKSVNKVAAIVREEMNRAGALEVLMPMVQPGDLWQETGRWDYYGKELLRVKDRHGRDYCLGPTHEEVITDLVRGEVKSYKQLPLNLYQIQTKFRDEIRPRFGLMRGREFIMKDAYSFDKDEAGAEESYRGMFEAYKKAFSRIGLNFRPVQADSGAIGGDFSHEFHVLADTGEDTIAVCKDEKCGYAANLEKAKVAAPTGESMLNAECPAIEEVATPGKHTVEEVCEFLGVEQDKLVKTLLFTVDGEPVAALVRGDRELNDVKLRNLVGGNEIEMASEEQVKEWTGAPVGFAGPVGLKIERIFADHELLTETDWIAGANKGDTHIKHLSLGRDCKIEQFADLRVITEADPCPECGAAIEFTKGIEVGHVFKLGSKYSKSMEATFLDENGKTQPMVMGCYGIGVSRIVASAIEQNNDENGAIFPPTIAPFELCVISLGGKDEAVNEKAEEFYNELMEMGIDAAYDDRKERPGVKFADADLIGYPMQLVIGGKGLKNGIVEAKNRKTGEKIELPLEGFTEAFKAWRAEIWQSWGLKA.

The protein belongs to the class-II aminoacyl-tRNA synthetase family. ProS type 1 subfamily. Homodimer.

It is found in the cytoplasm. It carries out the reaction tRNA(Pro) + L-proline + ATP = L-prolyl-tRNA(Pro) + AMP + diphosphate. Catalyzes the attachment of proline to tRNA(Pro) in a two-step reaction: proline is first activated by ATP to form Pro-AMP and then transferred to the acceptor end of tRNA(Pro). As ProRS can inadvertently accommodate and process non-cognate amino acids such as alanine and cysteine, to avoid such errors it has two additional distinct editing activities against alanine. One activity is designated as 'pretransfer' editing and involves the tRNA(Pro)-independent hydrolysis of activated Ala-AMP. The other activity is designated 'posttransfer' editing and involves deacylation of mischarged Ala-tRNA(Pro). The misacylated Cys-tRNA(Pro) is not edited by ProRS. The chain is Proline--tRNA ligase from Maridesulfovibrio salexigens (strain ATCC 14822 / DSM 2638 / NCIMB 8403 / VKM B-1763) (Desulfovibrio salexigens).